The sequence spans 804 residues: Endoplasmin (804 aa).

The first 21 residues, 1–21 (MRALWVLGLCCVLLTFGSVRA), serve as a signal peptide directing secretion. Positions 42–44 (SRT) match the SRT pseudosubstrate motif motif. N-linked (GlcNAc...) asparagine glycosylation is present at asparagine 62. Serine 64 carries the post-translational modification Phosphoserine. N-linked (GlcNAc...) asparagine glycosylation is present at asparagine 107. Positions 107, 149, and 162 each coordinate ATP. Lysine 168 bears the N6-(2-hydroxyisobutyryl)lysine mark. Serine 172 carries the post-translational modification Phosphoserine. Position 199 (phenylalanine 199) interacts with ATP. N-linked (GlcNAc...) asparagine glycosylation is present at asparagine 217. Threonine 288 carries the post-translational modification Phosphothreonine; by CK2. Residues 288–323 (TVEEPMEEEEAAKEEKEDSDDEAAVEEEEEEKKPKT) form a disordered region. Residues 289 to 317 (VEEPMEEEEAAKEEKEDSDDEAAVEEEEE) are compositionally biased toward acidic residues. Serine 306 carries the post-translational modification Phosphoserine; by CK2. Serine 403 is modified (phosphoserine). An N6-succinyllysine modification is found at lysine 404. Asparagine 445 is a glycosylation site (N-linked (GlcNAc...) asparagine). Serine 447 bears the Phosphoserine mark. An N6-acetyllysine modification is found at lysine 479. Residues asparagine 481 and asparagine 502 are each glycosylated (N-linked (GlcNAc...) asparagine). Lysine 633 carries the N6-succinyllysine modification. Positions 750 to 804 (DPDAKVEEEPEEEPEETTEDTTEDTEQDDEEEMDAGTDDEEQETVKKSTAEKDEL) are disordered. Residues 757 to 791 (EEPEEEPEETTEDTTEDTEQDDEEEMDAGTDDEEQ) show a composition bias toward acidic residues. 4 positions are modified to phosphothreonine; by CK2: threonine 766, threonine 770, threonine 774, and threonine 786. Residues 792 to 804 (ETVKKSTAEKDEL) are compositionally biased toward basic and acidic residues. The short motif at 801-804 (KDEL) is the Prevents secretion from ER element.

Belongs to the heat shock protein 90 family. As to quaternary structure, homodimer; disulfide-linked. Component of an EIF2 complex at least composed of CELF1/CUGBP1, CALR, CALR3, EIF2S1, EIF2S2, HSP90B1 and HSPA5. Part of a large chaperone multiprotein complex comprising DNAJB11, HSP90B1, HSPA5, HYOU, PDIA2, PDIA4, PDIA6, PPIB, SDF2L1, UGGT1 and very small amounts of ERP29, but not, or at very low levels, CALR nor CANX. Interacts with AIMP1; regulates its retention in the endoplasmic reticulum. Hyperglycosylated form interacts with OS9; promoting its degradation by the endoplasmic reticulum associated degradation (ERAD). Interacts with CNPY3. This interaction is disrupted in the presence of ATP. Interacts with TLR4 and TLR9, but not with TLR3. Interacts with MZB1 in a calcium-dependent manner. Interacts with METTL23. Interacts with IL1B; the interaction facilitates cargo translocation into the ERGIC. Interacts with EIF2AK3. Post-translationally, phosphorylated by CK2. N-glycosylated cotranslationally at Asn-217 by STT3A-containing OST-A complex: this glycosylation is constitutive. In response to various stress, 5 additional facultative sites (Asn-62, Asn-107, Asn-445, Asn-481 and Asn-502) can be glycosylated post-translationally by STT3B-containing OST-B complex, leading to a hyperglycosylated form that is degraded by the ER-associated degradation (ERAD) pathway. In normal conditions, the OST-A complex together with CCDC134 prevent glycosylation at facultative sites during protein folding, thereby preventing hyperglycosylation. Mechanistically, nascent HSP90B1 is tethered during translation to a specialized CCDC134-containing translocon that forms a microenvironment for its folding, in which STT3A associates with the SRT pseudosubstrate motif, and prevents access to facultative glycosylation sites until folding is completed, rendering its facultative sites inaccessible to the OST-B complex. In terms of tissue distribution, detected in heart muscle (at protein level).

It localises to the endoplasmic reticulum lumen. It is found in the sarcoplasmic reticulum lumen. Its subcellular location is the melanosome. It carries out the reaction ATP + H2O = ADP + phosphate + H(+). In terms of biological role, ATP-dependent chaperone involved in the processing of proteins in the endoplasmic reticulum, regulating their transport. Together with MESD, acts as a modulator of the Wnt pathway by promoting the folding of LRP6, a coreceptor of the canonical Wnt pathway. When associated with CNPY3, required for proper folding of Toll-like receptors. Promotes folding and trafficking of TLR4 to the cell surface. May participate in the unfolding of cytosolic leaderless cargos (lacking the secretion signal sequence) such as the interleukin 1/IL-1 to facilitate their translocation into the ERGIC (endoplasmic reticulum-Golgi intermediate compartment) and secretion; the translocation process is mediated by the cargo receptor TMED10. May also function in endoplasmic reticulum associated degradation (ERAD); it is however unclear whether it participates to ERAD or is a target of ERAD. The sequence is that of Endoplasmin (HSP90B1) from Canis lupus familiaris (Dog).